Reading from the N-terminus, the 426-residue chain is Glutamate-1-semialdehyde 2,1-aminomutase (426 aa).

An N6-(pyridoxal phosphate)lysine modification is found at Lys265.

This sequence belongs to the class-III pyridoxal-phosphate-dependent aminotransferase family. HemL subfamily. Requires pyridoxal 5'-phosphate as cofactor.

Its subcellular location is the cytoplasm. The enzyme catalyses (S)-4-amino-5-oxopentanoate = 5-aminolevulinate. It participates in porphyrin-containing compound metabolism; protoporphyrin-IX biosynthesis; 5-aminolevulinate from L-glutamyl-tRNA(Glu): step 2/2. The polypeptide is Glutamate-1-semialdehyde 2,1-aminomutase (Hyperthermus butylicus (strain DSM 5456 / JCM 9403 / PLM1-5)).